We begin with the raw amino-acid sequence, 109 residues long: Ubiquitin-related modifier 1 homolog (109 aa).

Residue glycine 109 is modified to 1-thioglycine. Glycine 109 is covalently cross-linked (Glycyl lysine isopeptide (Gly-Lys) (interchain with K-? in acceptor proteins)).

Belongs to the URM1 family. In terms of processing, C-terminal thiocarboxylation occurs in 2 steps, it is first acyl-adenylated (-COAMP) via the hesA/moeB/thiF part of the MOCS3 homolog, then thiocarboxylated (-COSH) via the rhodanese domain of the MOCS3 homolog.

It is found in the cytoplasm. It functions in the pathway tRNA modification; 5-methoxycarbonylmethyl-2-thiouridine-tRNA biosynthesis. Acts as a sulfur carrier required for 2-thiolation of mcm(5)S(2)U at tRNA wobble positions of cytosolic tRNA(Lys), tRNA(Glu) and tRNA(Gln). Serves as sulfur donor in tRNA 2-thiolation reaction by being thiocarboxylated (-COSH) at its C-terminus by MOCS3. The sulfur is then transferred to tRNA to form 2-thiolation of mcm(5)S(2)U. Also acts as a ubiquitin-like protein (UBL) that is covalently conjugated via an isopeptide bond to lysine residues of target proteins. The thiocarboxylated form serves as substrate for conjugation and oxidative stress specifically induces the formation of UBL-protein conjugates. The polypeptide is Ubiquitin-related modifier 1 homolog (Culex quinquefasciatus (Southern house mosquito)).